We begin with the raw amino-acid sequence, 140 residues long: uncharacterized protein (140 aa).

The protein belongs to the SufE family.

This is an uncharacterized protein from Rhizobium meliloti (strain 1021) (Ensifer meliloti).